Reading from the N-terminus, the 338-residue chain is Aspartate carbamoyltransferase catalytic subunit (338 aa).

Carbamoyl phosphate-binding residues include Arg-59 and Thr-60. Lys-87 lines the L-aspartate pocket. Arg-109, His-142, and Gln-145 together coordinate carbamoyl phosphate. The L-aspartate site is built by Arg-182 and Arg-248. Positions 289 and 290 each coordinate carbamoyl phosphate.

It belongs to the aspartate/ornithine carbamoyltransferase superfamily. ATCase family. As to quaternary structure, heterododecamer (2C3:3R2) of six catalytic PyrB chains organized as two trimers (C3), and six regulatory PyrI chains organized as three dimers (R2).

It catalyses the reaction carbamoyl phosphate + L-aspartate = N-carbamoyl-L-aspartate + phosphate + H(+). Its pathway is pyrimidine metabolism; UMP biosynthesis via de novo pathway; (S)-dihydroorotate from bicarbonate: step 2/3. Catalyzes the condensation of carbamoyl phosphate and aspartate to form carbamoyl aspartate and inorganic phosphate, the committed step in the de novo pyrimidine nucleotide biosynthesis pathway. This is Aspartate carbamoyltransferase catalytic subunit from Synechococcus elongatus (strain ATCC 33912 / PCC 7942 / FACHB-805) (Anacystis nidulans R2).